We begin with the raw amino-acid sequence, 274 residues long: Thiamine kinase (274 aa).

This sequence belongs to the thiamine kinase family.

It catalyses the reaction thiamine + ATP = thiamine phosphate + ADP + H(+). Its pathway is cofactor biosynthesis; thiamine diphosphate biosynthesis; thiamine phosphate from thiamine: step 1/1. Functionally, catalyzes the ATP-dependent phosphorylation of thiamine to thiamine phosphate. Is involved in thiamine salvage. This chain is Thiamine kinase, found in Salmonella newport (strain SL254).